The sequence spans 509 residues: Bifunctional purine biosynthesis protein PurH (509 aa).

Residues 1–144 (MKRALISVSD…KNYAAVTVVV (144 aa)) enclose the MGS-like domain.

Belongs to the PurH family.

The catalysed reaction is (6R)-10-formyltetrahydrofolate + 5-amino-1-(5-phospho-beta-D-ribosyl)imidazole-4-carboxamide = 5-formamido-1-(5-phospho-D-ribosyl)imidazole-4-carboxamide + (6S)-5,6,7,8-tetrahydrofolate. It catalyses the reaction IMP + H2O = 5-formamido-1-(5-phospho-D-ribosyl)imidazole-4-carboxamide. It participates in purine metabolism; IMP biosynthesis via de novo pathway; 5-formamido-1-(5-phospho-D-ribosyl)imidazole-4-carboxamide from 5-amino-1-(5-phospho-D-ribosyl)imidazole-4-carboxamide (10-formyl THF route): step 1/1. It functions in the pathway purine metabolism; IMP biosynthesis via de novo pathway; IMP from 5-formamido-1-(5-phospho-D-ribosyl)imidazole-4-carboxamide: step 1/1. This is Bifunctional purine biosynthesis protein PurH from Listeria monocytogenes serotype 4a (strain HCC23).